A 542-amino-acid polypeptide reads, in one-letter code: Chaperonin GroEL 2 (542 aa).

Residues 30–33, Lys51, 87–91, Gly415, and Asp496 each bind ATP; these read TLGP and DGTTT.

It belongs to the chaperonin (HSP60) family. As to quaternary structure, forms a cylinder of 14 subunits composed of two heptameric rings stacked back-to-back. Interacts with the co-chaperonin GroES.

It localises to the cytoplasm. The enzyme catalyses ATP + H2O + a folded polypeptide = ADP + phosphate + an unfolded polypeptide.. Functionally, together with its co-chaperonin GroES, plays an essential role in assisting protein folding. The GroEL-GroES system forms a nano-cage that allows encapsulation of the non-native substrate proteins and provides a physical environment optimized to promote and accelerate protein folding. The chain is Chaperonin GroEL 2 from Chelativorans sp. (strain BNC1).